Here is a 166-residue protein sequence, read N- to C-terminus: Lipoprotein signal peptidase (166 aa).

Transmembrane regions (helical) follow at residues 9–29 (ASGALAPWLGISLIVILFDQL), 45–65 (ALTSFFNLVLVYNRGAAFGFL), 71–91 (WQRWAFTALGVGATLVICFLL), and 100–120 (FSVSLALILGGALGNVIDRLV). Residues Asp126 and Asp144 contribute to the active site. The chain crosses the membrane as a helical span at residues 135-155 (WHFPAFNLADSAITIGAVLLI).

Belongs to the peptidase A8 family.

It localises to the cell inner membrane. It catalyses the reaction Release of signal peptides from bacterial membrane prolipoproteins. Hydrolyzes -Xaa-Yaa-Zaa-|-(S,diacylglyceryl)Cys-, in which Xaa is hydrophobic (preferably Leu), and Yaa (Ala or Ser) and Zaa (Gly or Ala) have small, neutral side chains.. The protein operates within protein modification; lipoprotein biosynthesis (signal peptide cleavage). Functionally, this protein specifically catalyzes the removal of signal peptides from prolipoproteins. This chain is Lipoprotein signal peptidase, found in Burkholderia cenocepacia (strain ATCC BAA-245 / DSM 16553 / LMG 16656 / NCTC 13227 / J2315 / CF5610) (Burkholderia cepacia (strain J2315)).